Here is a 202-residue protein sequence, read N- to C-terminus: Syndecan-4 (202 aa).

The first 23 residues, 1-23 (MAPVCLFAPLLLLLLGGFPVAPG), serve as a signal peptide directing secretion. Residues 24–149 (ESIRETEVID…QGSNIFERTE (126 aa)) lie on the Extracellular side of the membrane. Disordered stretches follow at residues 42–76 (YFSG…TEEP) and 89–138 (LDNH…MSST). Ser44 carries an O-linked (Xyl...) (glycosaminoglycan) serine glycan. The segment covering 48–62 (PDDEDAGGLEQDSDF) has biased composition (acidic residues). O-linked (Xyl...) (glycosaminoglycan) serine glycans are attached at residues Ser65 and Ser67. The span at 105–121 (SEPKELEENEVIPKRVP) shows a compositional bias: basic and acidic residues. The helical transmembrane segment at 150 to 174 (VLAALIVGGVVGILFAVFLILLLVY) threads the bilayer. At 175 to 202 (RMKKKDEGSYDLGKKPIYKKAPTNEFYA) the chain is on the cytoplasmic side.

It belongs to the syndecan proteoglycan family. Homodimer. Interacts with CDCP1 and SDCBP. Interacts (via its cytoplasmic domain) with GIPC (via its PDZ domain). Interacts (via its cytoplasmic domain) with NUDT16L1. Interacts with DNM2; this interaction is markedly enhanced at focal ahesion site upon induction of focal adhesions and stress-fiber formation. In terms of processing, shedding is enhanced by a number of factors such as heparanase, thrombin or EGF. Also by stress and wound healing. PMA-mediated shedding is inhibited by TIMP3. O-glycosylated; contains both chondroitin sulfate and heparan sulfate. Ser-44, Ser-65 and Ser-67 can all be modified by either chondroitin sulfate or heparan sulfate, and the protein exists in forms that contain only chondroitin sulfate, only heparan sulfate and both chondroitin sulfate and heparan sulfate.

The protein resides in the membrane. It is found in the secreted. In terms of biological role, cell surface proteoglycan which regulates exosome biogenesis in concert with SDCBP and PDCD6IP. The chain is Syndecan-4 from Rattus norvegicus (Rat).